Reading from the N-terminus, the 275-residue chain is 3-methyl-2-oxobutanoate hydroxymethyltransferase (275 aa).

Residues aspartate 49 and aspartate 88 each contribute to the Mg(2+) site. Residues aspartate 49–serine 50, aspartate 88, and lysine 118 each bind 3-methyl-2-oxobutanoate. Glutamate 120 serves as a coordination point for Mg(2+). The Proton acceptor role is filled by glutamate 187.

It belongs to the PanB family. In terms of assembly, homodecamer; pentamer of dimers. Requires Mg(2+) as cofactor.

The protein resides in the cytoplasm. It catalyses the reaction 3-methyl-2-oxobutanoate + (6R)-5,10-methylene-5,6,7,8-tetrahydrofolate + H2O = 2-dehydropantoate + (6S)-5,6,7,8-tetrahydrofolate. It functions in the pathway cofactor biosynthesis; (R)-pantothenate biosynthesis; (R)-pantoate from 3-methyl-2-oxobutanoate: step 1/2. Its function is as follows. Catalyzes the reversible reaction in which hydroxymethyl group from 5,10-methylenetetrahydrofolate is transferred onto alpha-ketoisovalerate to form ketopantoate. The chain is 3-methyl-2-oxobutanoate hydroxymethyltransferase from Brucella suis (strain ATCC 23445 / NCTC 10510).